A 293-amino-acid chain; its full sequence is Exosome complex component RRP4 (293 aa).

The tract at residues Met-1 to Arg-20 is disordered. The S1 motif domain occupies Glu-79–Arg-159. Residue Ser-124 is modified to Phosphoserine.

This sequence belongs to the RRP4 family. Component of the RNA exosome core complex (Exo-9), composed of EXOSC1, EXOSC2, EXOSC3, EXOSC4, EXOSC5, EXOSC6, EXOSC7, EXOSC8 and EXOSC9; within the complex interacts with EXOSC4 and EXOSC7. The catalytically inactive RNA exosome core complex (Exo-9) associates with the catalytic subunit EXOSC10/RRP6. Exo-9 may associate with DIS3 to form the nucleolar exosome complex, or DIS3L to form the cytoplasmic exosome complex. Exo-9 is formed by a hexameric base ring consisting of the heterodimers EXOSC4-EXOSC9, EXOSC5-EXOSC8 and EXOSC6-EXOSC7, and a cap ring consisting of EXOSC1, EXOSC2 and EXOSC3. The RNA exosome complex associates with cofactors C1D/RRP47, MPHOSPH6/MPP6 and MTREX/MTR4. Interacts with GTPBP1. Interacts with ZFP36L1 (via N-terminus).

The protein localises to the cytoplasm. It is found in the nucleus. The protein resides in the nucleolus. Its function is as follows. Non-catalytic component of the RNA exosome complex which has 3'-&gt;5' exoribonuclease activity and participates in a multitude of cellular RNA processing and degradation events. In the nucleus, the RNA exosome complex is involved in proper maturation of stable RNA species such as rRNA, snRNA and snoRNA, in the elimination of RNA processing by-products and non-coding 'pervasive' transcripts, such as antisense RNA species and promoter-upstream transcripts (PROMPTs), and of mRNAs with processing defects, thereby limiting or excluding their export to the cytoplasm. The RNA exosome may be involved in Ig class switch recombination (CSR) and/or Ig variable region somatic hypermutation (SHM) by targeting AICDA deamination activity to transcribed dsDNA substrates. In the cytoplasm, the RNA exosome complex is involved in general mRNA turnover and specifically degrades inherently unstable mRNAs containing AU-rich elements (AREs) within their 3' untranslated regions, and in RNA surveillance pathways, preventing translation of aberrant mRNAs. It seems to be involved in degradation of histone mRNA. The catalytic inactive RNA exosome core complex of 9 subunits (Exo-9) is proposed to play a pivotal role in the binding and presentation of RNA for ribonucleolysis, and to serve as a scaffold for the association with catalytic subunits and accessory proteins or complexes. EXOSC2 as peripheral part of the Exo-9 complex stabilizes the hexameric ring of RNase PH-domain subunits through contacts with EXOSC4 and EXOSC7. This Mus musculus (Mouse) protein is Exosome complex component RRP4 (Exosc2).